The chain runs to 49 residues: U3-plectoxin-Pt1a (49 aa).

Cystine bridges form between Cys-2–Cys-16, Cys-9–Cys-30, Cys-15–Cys-41, Cys-32–Cys-39, and Cys-45–Cys-49.

As to expression, expressed by the venom gland.

It is found in the secreted. Its function is as follows. Potent toxin that may paralyze and/or kill insect pests such as H.virescens (lepidoptera), S.exigua (beet armyworm) and M.sexta (tobacco hornworm). This chain is U3-plectoxin-Pt1a, found in Plectreurys tristis (Spider).